Here is a 304-residue protein sequence, read N- to C-terminus: Prephenate dehydratase (304 aa).

The 176-residue stretch at 3-178 (RIAYFGPVGT…ARTRFLLMRR (176 aa)) folds into the Prephenate dehydratase domain. An ACT domain is found at 193-271 (SIVAAAANRT…DVRFLGSFAR (79 aa)).

The enzyme catalyses prephenate + H(+) = 3-phenylpyruvate + CO2 + H2O. The protein operates within amino-acid biosynthesis; L-phenylalanine biosynthesis; phenylpyruvate from prephenate: step 1/1. The sequence is that of Prephenate dehydratase (pheA) from Amycolatopsis methanolica.